The following is a 709-amino-acid chain: Ribosomal RNA large subunit methyltransferase K/L (709 aa).

The THUMP domain occupies 43-154 (LAYRITLWTR…NGVITIAMNF (112 aa)).

It belongs to the methyltransferase superfamily. RlmKL family.

It localises to the cytoplasm. The enzyme catalyses guanosine(2445) in 23S rRNA + S-adenosyl-L-methionine = N(2)-methylguanosine(2445) in 23S rRNA + S-adenosyl-L-homocysteine + H(+). It carries out the reaction guanosine(2069) in 23S rRNA + S-adenosyl-L-methionine = N(2)-methylguanosine(2069) in 23S rRNA + S-adenosyl-L-homocysteine + H(+). In terms of biological role, specifically methylates the guanine in position 2445 (m2G2445) and the guanine in position 2069 (m7G2069) of 23S rRNA. This chain is Ribosomal RNA large subunit methyltransferase K/L, found in Shewanella baltica (strain OS195).